Reading from the N-terminus, the 140-residue chain is Putative pre-16S rRNA nuclease (140 aa).

The protein belongs to the YqgF nuclease family.

The protein localises to the cytoplasm. Could be a nuclease involved in processing of the 5'-end of pre-16S rRNA. This Moorella thermoacetica (strain ATCC 39073 / JCM 9320) protein is Putative pre-16S rRNA nuclease.